Consider the following 199-residue polypeptide: Alpha-D-glucose 1-phosphate phosphatase YihX (199 aa).

The active-site Nucleophile is aspartate 6. Residue aspartate 6 coordinates Mg(2+). Residues 6-8 (DLG), 107-108 (SN), lysine 141, and aspartate 166 contribute to the substrate site. Aspartate 166 lines the Mg(2+) pocket.

Belongs to the HAD-like hydrolase superfamily. YihX family. It depends on Mg(2+) as a cofactor. Requires Mn(2+) as cofactor. Co(2+) serves as cofactor. The cofactor is Zn(2+).

It catalyses the reaction alpha-D-glucose 1-phosphate + H2O = D-glucose + phosphate. Its function is as follows. Catalyzes the dephosphorylation of alpha-D-glucose 1-phosphate (Glc1P) and, to a lesser extent, of other sugar phosphates. Has no activity with the beta form of Glc1P. In addition, YihX has significant phosphatase activity against pyridoxal phosphate (PLP) and low beta-phosphoglucomutase activity. This Escherichia coli (strain K12) protein is Alpha-D-glucose 1-phosphate phosphatase YihX (yihX).